The primary structure comprises 85 residues: Beta-toxin BmKAS (85 aa).

A signal peptide spans 1-19 (MKTVIFLIVSSLLLIGVKT). The region spanning 20–82 (DNGYLLDKYT…LWNYNTNKCN (63 aa)) is the LCN-type CS-alpha/beta domain. 4 disulfide bridges follow: C31–C81, C35–C56, C42–C63, and C46–C65.

Expressed by the venom gland.

It localises to the secreted. Its function is as follows. Beta toxins bind voltage-independently at site-4 of sodium channels (Nav) and shift the voltage of activation toward more negative potentials thereby affecting sodium channel activation and promoting spontaneous and repetitive firing. It binds to distinct receptor sites of mammal and insect voltage-gated sodium channels. It displays antinociceptive effect in rat models, which is due to its specific modulation of sodium channels of sensory neurons. It also significantly stimulates the binding of [3H]-ryanodine to ryanodine receptors on the sarcoplasmic reticulum of the skeletal muscle through an indirect mechanism. And it promotes noradrenaline release from the rat hippocampus slice. The protein is Beta-toxin BmKAS of Olivierus martensii (Manchurian scorpion).